A 717-amino-acid chain; its full sequence is Probable metal-nicotianamine transporter YSL12 (717 aa).

The interval 1–56 (MASHANASGGGGDEEMVEASTLRHRHGAGKDANGVGTERQLAAAAAEGEEEGPSSV) is disordered. 14 helical membrane passes run 76 to 96 (AFVVSFFLSIMFSIIVMKLNL), 99 to 119 (GIIPSLNVSAGLLGFFFVRLW), 144 to 164 (CVVAAYGIAFSGGFGTYLFGM), 186 to 206 (IGWMIGFLFLVSFIGLLALVP), 248 to 268 (LGKFFLFSFVWGFFQWFYTAG), 306 to 326 (IVNVSVLLGGILSWGIMWPLI), 351 to 371 (VFISIALILGDGLYNFVKVLI), 422 to 442 (VAFGGYVAVAAVSIGTLPQIF), 450 to 470 (ILVAYVFAPVLAFCNAYGAGL), 482 to 502 (LAIFIFGAWAGASNGGVLVGL), 536 to 556 (FVSQVIGTAMGCVIAPCVFWL), 593 to 613 (LPKHCLTLCYIFFAAAIAINL), 636 to 656 (FYIGSYFAIDMFIGTVILFVW), and 671 to 691 (VASGLICGDGIWTLPQSILAL).

The protein belongs to the YSL (TC 2.A.67.2) family. As to expression, expressed in root cortex and stele.

It localises to the membrane. In terms of biological role, may be involved in the transport of nicotianamine-chelated metals. This Oryza sativa subsp. japonica (Rice) protein is Probable metal-nicotianamine transporter YSL12 (YSL12).